Here is a 223-residue protein sequence, read N- to C-terminus: Adenylate kinase 4, mitochondrial (223 aa).

15–20 contacts a ribonucleoside 5'-triphosphate; that stretch reads GSGKGT. An NMP region spans residues 35-64; that stretch reads SSGHFLRENIKANTEVGDMAKQYIEKGLLV. 2 residues coordinate AMP: S36 and R41. K60 carries the N6-succinyllysine modification. AMP-binding positions include 62–64, 89–92, and Q96; these read LLV and GFPR. Positions 125 to 162 are LID; that stretch reads RRWIHPPSGRVYNLDFNPPHVHGMDDVTGEPLVQQEDD. A ribonucleoside 5'-triphosphate contacts are provided by residues R126 and 135–136; that span reads VY. R170 is a binding site for AMP. K175 is modified (N6-acetyllysine). 2 positions are modified to N6-acetyllysine; alternate: K179 and K186. 2 positions are modified to N6-succinyllysine; alternate: K179 and K186. Residue T199 coordinates a ribonucleoside 5'-triphosphate.

Belongs to the adenylate kinase family. AK3 subfamily. Monomer. Interacts with SLC25A5/ANT2.

The protein localises to the mitochondrion matrix. The enzyme catalyses a ribonucleoside 5'-phosphate + ATP = a ribonucleoside 5'-diphosphate + ADP. It catalyses the reaction AMP + ATP = 2 ADP. It carries out the reaction GTP + AMP = GDP + ADP. The catalysed reaction is CMP + ATP = CDP + ADP. The enzyme catalyses GTP + CMP = CDP + GDP. It catalyses the reaction dAMP + ATP = dADP + ADP. It carries out the reaction dCMP + ATP = dCDP + ADP. The catalysed reaction is a 2'-deoxyribonucleoside 5'-diphosphate + ATP = a 2'-deoxyribonucleoside 5'-triphosphate + ADP. The enzyme catalyses a ribonucleoside 5'-diphosphate + ATP = a ribonucleoside 5'-triphosphate + ADP. It catalyses the reaction GDP + ATP = GTP + ADP. It carries out the reaction CDP + GTP = CTP + GDP. The catalysed reaction is CDP + ATP = CTP + ADP. The enzyme catalyses UDP + ATP = UTP + ADP. It catalyses the reaction GTP + UDP = UTP + GDP. It carries out the reaction dADP + GTP = dATP + GDP. The catalysed reaction is dCDP + GTP = dCTP + GDP. The enzyme catalyses dCDP + ATP = dCTP + ADP. It catalyses the reaction dGDP + ATP = dGTP + ADP. It carries out the reaction dTDP + GTP = dTTP + GDP. The catalysed reaction is dTDP + ATP = dTTP + ADP. Functionally, broad-specificity mitochondrial nucleoside phosphate kinase involved in cellular nucleotide homeostasis by catalyzing nucleoside-phosphate interconversions. Similar to other adenylate kinases, preferentially catalyzes the phosphorylation of the nucleoside monophosphate AMP with ATP as phosphate donor to produce ADP. Phosphorylates only AMP when using GTP as phosphate donor. In vitro, can also catalyze the phosphorylation of CMP, dAMP and dCMP and use GTP as an alternate phosphate donor. Moreover, exhibits a diphosphate kinase activity, producing ATP, CTP, GTP, UTP, TTP, dATP, dCTP and dGTP from the corresponding diphosphate substrates with either ATP or GTP as phosphate donors. Plays a role in controlling cellular ATP levels by regulating phosphorylation and activation of the energy sensor protein kinase AMPK. Plays a protective role in the cellular response to oxidative stress. This Bos taurus (Bovine) protein is Adenylate kinase 4, mitochondrial.